Here is a 413-residue protein sequence, read N- to C-terminus: DnaJ protein homolog (413 aa).

In terms of domain architecture, J spans 10-75 (NTKYYEILGV…REIYDQYGED (66 aa)). The CR-type zinc-finger motif lies at 133 to 217 (GTSKKLSLSR…CKGEKVVQEK (85 aa)). CXXCXGXG motif repeat units lie at residues 146 to 153 (CSKCKGKG), 162 to 169 (CPGCQGSG), 189 to 196 (CNECKGTG), and 205 to 212 (CSQCKGEK). Positions 387-413 (RRKQAQEAYDEDEDMHGGAQRVQCAQQ) are disordered. Cys-410 carries the cysteine methyl ester modification. Cys-410 carries S-farnesyl cysteine lipidation. The propeptide at 411 to 413 (AQQ) is removed in mature form.

Expressed in seedlings in all tissues, but exceedingly high levels in hypocotyledons and roots.

Its subcellular location is the cell membrane. In terms of biological role, plays a continuous role in plant development probably in the structural organization of compartments. The sequence is that of DnaJ protein homolog (DNAJ1) from Cucumis sativus (Cucumber).